Consider the following 877-residue polypeptide: DNA polymerase I (877 aa).

Positions 1–310 (MKKKLVLIDG…FTLADRVTEE (310 aa)) constitute a 5'-3' exonuclease domain. One can recognise a 3'-5' exonuclease domain in the interval 311–465 (MLADKAALVV…ALERPFLDEL (155 aa)). Positions 469-877 (EQDRLLVELE…HYGSTWYDAK (409 aa)) are polymerase.

Belongs to the DNA polymerase type-A family. Single-chain monomer with multiple functions.

The catalysed reaction is DNA(n) + a 2'-deoxyribonucleoside 5'-triphosphate = DNA(n+1) + diphosphate. Functionally, in addition to polymerase activity, this DNA polymerase exhibits 3'-5' and 5'-3' exonuclease activity. The sequence is that of DNA polymerase I (polA) from Bacillus caldotenax.